The sequence spans 137 residues: Holo-[acyl-carrier-protein] synthase (137 aa).

Mg(2+) is bound by residues D8 and E57.

The protein belongs to the P-Pant transferase superfamily. AcpS family. It depends on Mg(2+) as a cofactor.

It is found in the cytoplasm. The catalysed reaction is apo-[ACP] + CoA = holo-[ACP] + adenosine 3',5'-bisphosphate + H(+). Transfers the 4'-phosphopantetheine moiety from coenzyme A to a Ser of acyl-carrier-protein. The sequence is that of Holo-[acyl-carrier-protein] synthase from Cereibacter sphaeroides (strain ATCC 17025 / ATH 2.4.3) (Rhodobacter sphaeroides).